We begin with the raw amino-acid sequence, 456 residues long: Protein ESC2 (456 aa).

The segment covering 1–24 (MTGDSRSISEPSINLDPDNTSFSD) has biased composition (polar residues). Residues 1 to 154 (MTGDSRSISE…SSIRSISPAG (154 aa)) form a disordered region. Positions 25-43 (ENSDDFFMDNSYDIDEIDH) are enriched in acidic residues. Over residues 83–93 (QSLSRSSSKNV) the composition is skewed to polar residues. A phosphoserine mark is found at Ser90, Ser125, and Ser126. The SUMO-like region 1 repeat unit spans residues 169–287 (ENDDFFKELA…QDFENEVSDI (119 aa)). Residues 301–360 (EATLESKLKEEEAALLIKERQEMERKLEKKRNEQEESEYREFESELKNVEETQEIKENDT) are a coiled coil. The SUMO-like region 2 repeat unit spans residues 380–456 (MEEVMRIALM…DEDMVDVIID (77 aa)).

As to quaternary structure, component of a cullin-RING ligase (CRL)-like complex composed of at least the cullin RTT101, a linker protein MMS1, and the potential substrate receptor ESC2. Interacts with RTT101 and MMS1. Interacts with SIR2.

It localises to the cytoplasm. Its subcellular location is the nucleus. May be a substrate targeting component of a cullin-RING-based E3 ubiquitin-protein ligase complex RTT101(MMS1-ESC2). Involved in HMR and telomere silencing via the recruitment or stabilizing of the SIR (silent information regulators) complex. The polypeptide is Protein ESC2 (ESC2) (Saccharomyces cerevisiae (strain ATCC 204508 / S288c) (Baker's yeast)).